A 39-amino-acid chain; its full sequence is Cytochrome b559 subunit beta (39 aa).

Residues tryptophan 14–serine 30 traverse the membrane as a helical segment. A heme-binding site is contributed by histidine 18.

This sequence belongs to the PsbE/PsbF family. In terms of assembly, heterodimer of an alpha subunit and a beta subunit. PSII is composed of 1 copy each of membrane proteins PsbA, PsbB, PsbC, PsbD, PsbE, PsbF, PsbH, PsbI, PsbJ, PsbK, PsbL, PsbM, PsbT, PsbX, PsbY, PsbZ, Psb30/Ycf12, at least 3 peripheral proteins of the oxygen-evolving complex and a large number of cofactors. It forms dimeric complexes. The cofactor is heme b.

It is found in the plastid membrane. In terms of biological role, this b-type cytochrome is tightly associated with the reaction center of photosystem II (PSII). PSII is a light-driven water:plastoquinone oxidoreductase that uses light energy to abstract electrons from H(2)O, generating O(2) and a proton gradient subsequently used for ATP formation. It consists of a core antenna complex that captures photons, and an electron transfer chain that converts photonic excitation into a charge separation. In Cuscuta europaea (European dodder), this protein is Cytochrome b559 subunit beta.